A 25-amino-acid chain; its full sequence is Bioremediase (25 aa).

Residues 1–25 (DFPIANGERQSPVDIDTKAVVQDPA) form the Alpha-carbonic anhydrase domain. Residues 1–25 (DFPIANGERQSPVDIDTKAVVQDPA) are disordered.

This sequence belongs to the alpha-carbonic anhydrase family. The cofactor is Zn(2+).

In terms of biological role, releases silica from silica-rich substances. The chain is Bioremediase from Thermoanaerobacter sp.